The sequence spans 437 residues: GTPase Obg (437 aa).

In terms of domain architecture, Obg spans 2–160 (SMFLDTAKVS…RQLELELKIL (159 aa)). Residues 161–338 (ADVGLVGFPS…LLEATAELLA (178 aa)) form the OBG-type G domain. GTP contacts are provided by residues 167–174 (GFPSVGKS), 192–196 (FTTIV), 214–217 (DLPG), 284–287 (NKMD), and 319–321 (SSL). Mg(2+) is bound by residues S174 and T194. Positions 359–437 (GFAAEEKAFE…IGKFEFEFVD (79 aa)) constitute an OCT domain.

It belongs to the TRAFAC class OBG-HflX-like GTPase superfamily. OBG GTPase family. In terms of assembly, monomer. Requires Mg(2+) as cofactor.

It is found in the cytoplasm. Functionally, an essential GTPase which binds GTP, GDP and possibly (p)ppGpp with moderate affinity, with high nucleotide exchange rates and a fairly low GTP hydrolysis rate. Plays a role in control of the cell cycle, stress response, ribosome biogenesis and in those bacteria that undergo differentiation, in morphogenesis control. This chain is GTPase Obg, found in Streptococcus equi subsp. equi (strain 4047).